We begin with the raw amino-acid sequence, 481 residues long: 3-isopropylmalate dehydratase large subunit (481 aa).

Positions 363, 423, and 426 each coordinate [4Fe-4S] cluster. The segment at 437 to 463 (GQRAASTSNRNFEGRQGRGGRTHLVSP) is disordered.

The protein belongs to the aconitase/IPM isomerase family. LeuC type 1 subfamily. In terms of assembly, heterodimer of LeuC and LeuD. The cofactor is [4Fe-4S] cluster.

It carries out the reaction (2R,3S)-3-isopropylmalate = (2S)-2-isopropylmalate. It functions in the pathway amino-acid biosynthesis; L-leucine biosynthesis; L-leucine from 3-methyl-2-oxobutanoate: step 2/4. In terms of biological role, catalyzes the isomerization between 2-isopropylmalate and 3-isopropylmalate, via the formation of 2-isopropylmaleate. In Salinispora arenicola (strain CNS-205), this protein is 3-isopropylmalate dehydratase large subunit.